A 202-amino-acid polypeptide reads, in one-letter code: Ribosomal RNA small subunit methyltransferase G (202 aa).

S-adenosyl-L-methionine-binding positions include Gly75, Phe80, 125-126 (VQ), and Arg139.

This sequence belongs to the methyltransferase superfamily. RNA methyltransferase RsmG family.

The protein resides in the cytoplasm. Its function is as follows. Specifically methylates the N7 position of a guanine in 16S rRNA. The polypeptide is Ribosomal RNA small subunit methyltransferase G (Mesomycoplasma hyopneumoniae (strain 232) (Mycoplasma hyopneumoniae)).